Consider the following 147-residue polypeptide: Deoxyuridine 5'-triphosphate nucleotidohydrolase (147 aa).

Substrate is bound by residues 67–69 (RSG), Asn80, and 84–86 (TID).

This sequence belongs to the dUTPase family. Mg(2+) is required as a cofactor.

The enzyme catalyses dUTP + H2O = dUMP + diphosphate + H(+). It participates in pyrimidine metabolism; dUMP biosynthesis; dUMP from dCTP (dUTP route): step 2/2. Functionally, this enzyme is involved in nucleotide metabolism: it produces dUMP, the immediate precursor of thymidine nucleotides and it decreases the intracellular concentration of dUTP so that uracil cannot be incorporated into DNA. This chain is Deoxyuridine 5'-triphosphate nucleotidohydrolase, found in Anaplasma marginale (strain St. Maries).